A 103-amino-acid chain; its full sequence is Somatoliberin (103 aa).

An N-terminal signal peptide occupies residues 1 to 19 (MLLWVLFVILILTSGSHCS). Propeptides lie at residues 20–30 (LPPSPPFRMQR) and 74–103 (QEDS…SADA).

This sequence belongs to the glucagon family.

The protein localises to the secreted. Its function is as follows. GRF is released by the hypothalamus and acts on the adenohypophyse to stimulate the secretion of growth hormone. In Mus musculus (Mouse), this protein is Somatoliberin (Ghrh).